The following is a 434-amino-acid chain: Glutamate-1-semialdehyde 2,1-aminomutase (434 aa).

K266 carries the N6-(pyridoxal phosphate)lysine modification.

The protein belongs to the class-III pyridoxal-phosphate-dependent aminotransferase family. HemL subfamily. Homodimer. Requires pyridoxal 5'-phosphate as cofactor.

It localises to the cytoplasm. The catalysed reaction is (S)-4-amino-5-oxopentanoate = 5-aminolevulinate. It participates in porphyrin-containing compound metabolism; protoporphyrin-IX biosynthesis; 5-aminolevulinate from L-glutamyl-tRNA(Glu): step 2/2. The chain is Glutamate-1-semialdehyde 2,1-aminomutase from Psychrobacter sp. (strain PRwf-1).